Reading from the N-terminus, the 249-residue chain is Probable transcriptional regulatory protein LIC_12886 (249 aa).

This sequence belongs to the TACO1 family.

The protein resides in the cytoplasm. The polypeptide is Probable transcriptional regulatory protein LIC_12886 (Leptospira interrogans serogroup Icterohaemorrhagiae serovar copenhageni (strain Fiocruz L1-130)).